The chain runs to 225 residues: Pyridoxine/pyridoxamine 5'-phosphate oxidase (225 aa).

Residues 9–12 and Lys-78 contribute to the substrate site; that span reads RVDY. FMN is bound by residues 73-78, 88-89, Lys-95, and Gln-117; these read RTVLCK and YT. Substrate-binding residues include Tyr-135, Arg-139, and Ser-143. FMN contacts are provided by residues 152 to 153 and Trp-198; that span reads QS. 204 to 206 is a binding site for substrate; the sequence is RLH. Arg-208 provides a ligand contact to FMN.

It belongs to the pyridoxamine 5'-phosphate oxidase family. In terms of assembly, homodimer. The cofactor is FMN.

The catalysed reaction is pyridoxamine 5'-phosphate + O2 + H2O = pyridoxal 5'-phosphate + H2O2 + NH4(+). It catalyses the reaction pyridoxine 5'-phosphate + O2 = pyridoxal 5'-phosphate + H2O2. It functions in the pathway cofactor metabolism; pyridoxal 5'-phosphate salvage; pyridoxal 5'-phosphate from pyridoxamine 5'-phosphate: step 1/1. Its pathway is cofactor metabolism; pyridoxal 5'-phosphate salvage; pyridoxal 5'-phosphate from pyridoxine 5'-phosphate: step 1/1. Its function is as follows. Catalyzes the oxidation of either pyridoxine 5'-phosphate (PNP) or pyridoxamine 5'-phosphate (PMP) into pyridoxal 5'-phosphate (PLP). The protein is Pyridoxine/pyridoxamine 5'-phosphate oxidase of Nocardia farcinica (strain IFM 10152).